Consider the following 388-residue polypeptide: Succinate--CoA ligase [ADP-forming] subunit beta (388 aa).

Positions 9 to 244 (KQLFAEYGLP…PSQDDPREAH (236 aa)) constitute an ATP-grasp domain. ATP contacts are provided by residues lysine 46, 53–55 (GRG), glutamate 99, threonine 102, and glutamate 107. The Mg(2+) site is built by asparagine 199 and aspartate 213. Substrate contacts are provided by residues asparagine 264 and 321–323 (GIV).

This sequence belongs to the succinate/malate CoA ligase beta subunit family. Heterotetramer of two alpha and two beta subunits. Requires Mg(2+) as cofactor.

The enzyme catalyses succinate + ATP + CoA = succinyl-CoA + ADP + phosphate. It catalyses the reaction GTP + succinate + CoA = succinyl-CoA + GDP + phosphate. Its pathway is carbohydrate metabolism; tricarboxylic acid cycle; succinate from succinyl-CoA (ligase route): step 1/1. Succinyl-CoA synthetase functions in the citric acid cycle (TCA), coupling the hydrolysis of succinyl-CoA to the synthesis of either ATP or GTP and thus represents the only step of substrate-level phosphorylation in the TCA. The beta subunit provides nucleotide specificity of the enzyme and binds the substrate succinate, while the binding sites for coenzyme A and phosphate are found in the alpha subunit. In Pseudomonas fluorescens (strain ATCC BAA-477 / NRRL B-23932 / Pf-5), this protein is Succinate--CoA ligase [ADP-forming] subunit beta.